Consider the following 462-residue polypeptide: Neuronal acetylcholine receptor subunit non-alpha-2 (462 aa).

Positions 1-30 (MTLAVIGLFTLFTSIIAITPAREFVSLAER) are cleaved as a signal peptide. At 31–234 (EDALLRELFQ…ITYSFILKRL (204 aa)) the chain is on the extracellular side. 2 N-linked (GlcNAc...) asparagine glycosylation sites follow: Asn53 and Asn168. A disulfide bridge links Cys155 with Cys169. The next 3 helical transmembrane spans lie at 235–259 (PLFY…VFYL), 267–284 (VSLS…LLVI), and 301–322 (YLLF…VINV). Residues 323–428 (HHRSSATYHP…WKFVAQVLDR (106 aa)) lie on the Cytoplasmic side of the membrane. Residues 362-372 (ELEPHSPDLKP) show a composition bias toward basic and acidic residues. Residues 362 to 384 (ELEPHSPDLKPRNKKGPPGPEGE) form a disordered region. Residues 429–446 (IFLWTFLTVSVLGTILIF) form a helical membrane-spanning segment.

This sequence belongs to the ligand-gated ion channel (TC 1.A.9) family. Acetylcholine receptor (TC 1.A.9.1) subfamily. In terms of assembly, neuronal AChR seems to be composed of two different type of subunits: alpha and beta.

It is found in the postsynaptic cell membrane. The protein resides in the cell membrane. After binding acetylcholine, the AChR responds by an extensive change in conformation that affects all subunits and leads to opening of an ion-conducting channel across the plasma membrane. This chain is Neuronal acetylcholine receptor subunit non-alpha-2, found in Carassius auratus (Goldfish).